A 153-amino-acid chain; its full sequence is ORM1-like protein 1 (153 aa).

Topologically, residues Met1–Tyr26 are cytoplasmic. A run of 2 helical transmembrane segments spans residues Ala27–Pro46 and Val47–Val67. Over Lys68 to Lys100 the chain is Cytoplasmic. A helical membrane pass occupies residues Phe101–Pro121. The Extracellular segment spans residues Thr122–His123. A helical membrane pass occupies residues Phe124 to Gly144. The Cytoplasmic segment spans residues Val145 to Tyr153.

It belongs to the ORM family. Ceramide-sensitive subunit of the serine palmitoyltransferase (SPT) complex, which is also composed of SPTLC1, SPTLC2/3 and SPTSSA/B.

Its subcellular location is the endoplasmic reticulum membrane. Plays an essential role in the homeostatic regulation of sphingolipid de novo biosynthesis by modulating the activity of the serine palmitoyltransferase (SPT) in response to ceramide levels. When complexed to SPT, the binding of ceramides to its N-terminus stabilizes a conformation that block SPT substrate entry, hence preventing SPT catalytic activity. Through this mechanism, maintains ceramide levels at sufficient concentrations for the production of complex sphingolipids, but which prevents the accumulation of ceramides to levels that trigger apoptosis. The polypeptide is ORM1-like protein 1 (ormdl1) (Xenopus laevis (African clawed frog)).